Reading from the N-terminus, the 159-residue chain is Na(+)/H(+) antiporter subunit E1 (159 aa).

The next 4 helical transmembrane spans lie at 1–21 (MAVQ…VTNS), 27–47 (FVLG…VLPG), 49–69 (FYVI…IELI), and 101–121 (WQIV…VLGV).

The protein belongs to the CPA3 antiporters (TC 2.A.63) subunit E family. May form a heterooligomeric complex that consists of seven subunits: mnhA1, mnhB1, mnhC1, mnhD1, mnhE1, mnhF1 and mnhG1.

It is found in the cell membrane. Functionally, mnh complex is a Na(+)/H(+) antiporter involved in Na(+) excretion. This is Na(+)/H(+) antiporter subunit E1 (mnhE1) from Staphylococcus aureus (strain Mu3 / ATCC 700698).